The primary structure comprises 103 residues: Putative membrane protein insertion efficiency factor (103 aa).

Belongs to the UPF0161 family.

It localises to the cell inner membrane. Functionally, could be involved in insertion of integral membrane proteins into the membrane. The polypeptide is Putative membrane protein insertion efficiency factor (Chlamydia pneumoniae (Chlamydophila pneumoniae)).